The chain runs to 312 residues: Zinc transporter ZitB (312 aa).

5 helical membrane-spanning segments follow: residues 21 to 41 (LLFA…GGIL), 48 to 68 (LADA…LLAV), 90 to 110 (AAFV…WEAI), 123 to 143 (LMMV…WILH), and 164 to 184 (LLGS…GWTP).

The protein belongs to the cation diffusion facilitator (CDF) transporter (TC 2.A.4) family. SLC30A subfamily.

The protein resides in the cell inner membrane. Its function is as follows. Involved in zinc efflux across the cytoplasmic membrane, thus reducing zinc accumulation in the cytoplasm and rendering bacteria more resistant to zinc. It may contribute to zinc homeostasis at low concentrations of zinc. The chain is Zinc transporter ZitB from Salmonella typhimurium (strain LT2 / SGSC1412 / ATCC 700720).